Reading from the N-terminus, the 143-residue chain is Cofilin (143 aa).

Positions 5–137 constitute an ADF-H domain; the sequence is GVAVADESLT…AYESVLEKVS (133 aa).

It belongs to the actin-binding proteins ADF family.

It localises to the cytoplasm. It is found in the cytoskeleton. The protein localises to the nucleus matrix. Its function is as follows. Controls reversibly actin polymerization and depolymerization in a pH-sensitive manner. It has the ability to bind G- and F-actin in a 1:1 ratio of cofilin to actin. Binding to F-actin is regulated by tropomyosin. It is the major component of intranuclear and cytoplasmic actin rods. Required for accumulation of actin at the cell division site via depolymerizing actin at the cell ends. In association with myosin II has a role in the assembly of the contractile ring via severing actin filaments. Involved in the maintenance of the contractile ring once formed. In association with profilin and capping protein, has a role in the mitotic reorganization of the actin cytoskeleton. This Eremothecium gossypii (strain ATCC 10895 / CBS 109.51 / FGSC 9923 / NRRL Y-1056) (Yeast) protein is Cofilin (COF1).